The sequence spans 97 residues: Large ribosomal subunit protein bL28 (97 aa).

Belongs to the bacterial ribosomal protein bL28 family.

This chain is Large ribosomal subunit protein bL28, found in Brucella ovis (strain ATCC 25840 / 63/290 / NCTC 10512).